Reading from the N-terminus, the 42-residue chain is Aspartate-semialdehyde dehydrogenase leader peptide (42 aa).

This is Aspartate-semialdehyde dehydrogenase leader peptide from Streptococcus mutans serotype c (strain ATCC 700610 / UA159).